The sequence spans 294 residues: MVAITAAMVGELRAKTDAPMMECKKALTEADGDMARAEEILRVKLGSKAGKAASRVTAEGIVAASINSTTGALLEVNCETDFVSKNDDFLAFANDCVKLVAEKNPADVAALLALPLNGQTVDEVRSALIGKIGENIMPRHFKRFAGSNKLVSYLHGTRIGVVVEFEGDDTAAKDVAMHIAAMKPVALSMADVPAEAIAVERSVAVQKAAESGKPPEIVEKMVEGSIQKYLKEVSLLNQTFVKNDKQTVEQMLKAANTTIKGFTMFVVGEGIEKRQDDFAAEVAAQVAAASKATA.

Positions 80–83 (TDFV) are involved in Mg(2+) ion dislocation from EF-Tu.

This sequence belongs to the EF-Ts family.

The protein localises to the cytoplasm. In terms of biological role, associates with the EF-Tu.GDP complex and induces the exchange of GDP to GTP. It remains bound to the aminoacyl-tRNA.EF-Tu.GTP complex up to the GTP hydrolysis stage on the ribosome. The sequence is that of Elongation factor Ts from Polynucleobacter necessarius subsp. necessarius (strain STIR1).